Consider the following 267-residue polypeptide: Probable aquaporin TIP3-2 (267 aa).

N-acetylmethionine is present on Met-1. Residue Ala-2 is modified to N-acetylalanine; in Probable aquaporin TIP3-2, N-terminally processed. Residues 2 to 26 lie on the Cytoplasmic side of the membrane; sequence ATSARRAYGFGRADEATHPDSIRAT. Residues 27–47 traverse the membrane as a helical segment; the sequence is LAEFLSTFVFVFAGEGSILAL. Residues 48–66 lie on the Vacuolar side of the membrane; the sequence is DKLYWDTAAHTGTNTPGGL. Residues 67 to 87 traverse the membrane as a helical segment; the sequence is VLVALAHALALFAAVSAAINV. The Cytoplasmic segment spans residues 88–110; it reads SGGHVNPAVTFAALIGGRISVIR. The NPA 1 signature appears at 93 to 95; that stretch reads NPA. Residues 111 to 131 form a helical membrane-spanning segment; it reads AIYYWVAQLIGAILACLLLRL. Residues 132–151 are Vacuolar-facing; it reads ATNGLRPVGFHVASGVSELH. Residues 152-172 form a helical membrane-spanning segment; sequence GLLMEIILTFALVYVVYSTAI. Over 173–178 the chain is Cytoplasmic; it reads DPKRGS. A helical transmembrane segment spans residues 179 to 199; sequence IGIIAPLAIGLIVGANILVGG. Residues 200 to 226 are Vacuolar-facing; sequence PFDGASMNPARAFGPALVGWRWSNHWI. The NPA 2 signature appears at 207–209; the sequence is NPA. The chain crosses the membrane as a helical span at residues 227–247; that stretch reads YWVGPFIGGALAALIYEYMII. Residues 248 to 267 are Cytoplasmic-facing; the sequence is PSVNEPPHHSTHQPLAPEDY.

Belongs to the MIP/aquaporin (TC 1.A.8) family. TIP (TC 1.A.8.10) subfamily. Predominantly expressed in developing seeds. Also expressed in rosette leaves.

The protein resides in the vacuole membrane. Functionally, aquaporins facilitate the transport of water and small neutral solutes across cell membranes. This is Probable aquaporin TIP3-2 (TIP3-2) from Arabidopsis thaliana (Mouse-ear cress).